The chain runs to 457 residues: Succinate-semialdehyde dehydrogenase [NADP(+)] 1 (457 aa).

An NADP(+)-binding site is contributed by 209-214; it reads GSEPAG. Catalysis depends on residues Glu-231 and Cys-265.

Belongs to the aldehyde dehydrogenase family.

It carries out the reaction succinate semialdehyde + NAD(+) + H2O = succinate + NADH + 2 H(+). It catalyses the reaction succinate semialdehyde + NADP(+) + H2O = succinate + NADPH + 2 H(+). Catalyzes the NADP(+)-dependent oxidation of succinate semialdehyde to succinate. It is believed to be the main source of succinate semialdehyde dehydrogenase activity in Mycobacterium. The sequence is that of Succinate-semialdehyde dehydrogenase [NADP(+)] 1 (gabD1) from Mycobacterium bovis (strain ATCC BAA-935 / AF2122/97).